Consider the following 132-residue polypeptide: mRNA interferase toxin YafO (132 aa).

As to quaternary structure, probably forms a complex with the antitoxin YafN which inhibits the mRNA interferase activity.

Its function is as follows. Toxic component of a type II toxin-antitoxin (TA) system. A translation-dependent mRNA interferase. Overexpression causes cessation of cell growth and inhibits cell proliferation via inhibition of translation; this blockage is overcome by subsequent expression of antitoxin YafN. Overexpression causes cleavage of a number of mRNAs in a ribosome-dependent fashion. YafO binding to the 50S ribosomal subunit in the translation complex induces mRNA cleavage 3' to the region protected by the ribosome; YafO alone is not able to digest mRNA. The polypeptide is mRNA interferase toxin YafO (yafO) (Escherichia coli (strain K12)).